Reading from the N-terminus, the 331-residue chain is D-lactate/D-glycerate dehydrogenase (331 aa).

NAD(+) contacts are provided by residues 154–155, D174, 205–206, N211, 232–234, and D258; these read RI, VP, and FAR. R234 is a catalytic residue. Residue E263 is part of the active site. H295 acts as the Proton donor in catalysis.

It belongs to the D-isomer specific 2-hydroxyacid dehydrogenase family. As to quaternary structure, homodimer.

It carries out the reaction (R)-lactate + NAD(+) = pyruvate + NADH + H(+). The enzyme catalyses (R)-glycerate + NAD(+) = 3-hydroxypyruvate + NADH + H(+). Functionally, has both D-lactate and D-glycerate dehydrogenase activities. Equally active on pyruvate and hydroxypyruvate. The sequence is that of D-lactate/D-glycerate dehydrogenase from Pediococcus acidilactici.